Reading from the N-terminus, the 220-residue chain is Small ribosomal subunit protein uS3 (220 aa).

The region spanning 39–107 (IREHVEGRLK…RVHINISEIK (69 aa)) is the KH type-2 domain.

This sequence belongs to the universal ribosomal protein uS3 family. In terms of assembly, part of the 30S ribosomal subunit. Forms a tight complex with proteins S10 and S14.

Binds the lower part of the 30S subunit head. Binds mRNA in the 70S ribosome, positioning it for translation. The polypeptide is Small ribosomal subunit protein uS3 (Shouchella clausii (strain KSM-K16) (Alkalihalobacillus clausii)).